A 462-amino-acid polypeptide reads, in one-letter code: Argininosuccinate lyase (462 aa).

This sequence belongs to the lyase 1 family. Argininosuccinate lyase subfamily.

Its subcellular location is the cytoplasm. The enzyme catalyses 2-(N(omega)-L-arginino)succinate = fumarate + L-arginine. It participates in amino-acid biosynthesis; L-arginine biosynthesis; L-arginine from L-ornithine and carbamoyl phosphate: step 3/3. This Bacillus thuringiensis (strain Al Hakam) protein is Argininosuccinate lyase.